The chain runs to 677 residues: MTQVAKKILVTCALPYANGSIHLGHMLEHIQADVWVRYQRMRGHQVNFICADDAHGTPIMLKAQQLGITPEQMIGEMSQEHQTDFAGFNISYDNYHSTHSEENRELSELIYTRLKENGFIKNRTISQLYDPEKGMFLPDRFVKGTCPKCKSPDQYGDNCEVCGATYSPTELIEPKSVVSGATPVMRDSEHFFFDLPSFSEMLQAWTRSGALQEQVANKMQEWFESGLQQWDISRDAPYFGFEIPNAPGKFFYVWLDAPIGYMGSFKNLCNKRGDLTSFDDYWKKDSDAELYHFIGKDIVYFHSLFWPAMLEGSGFRKPTNLFVHGYVTVNGAKMSKSRGTFIKASTWLNHFDADSLRYYYTAKLSSRIDDIDLNLEDFVQRVNADIVNKVVNLASRNAGFINKRFDGVLAAELADPALYKTFTDAAAVIGEAWESREFGKAIREIMALADMANRYVDEQAPWVVAKQEGRDADLQAICSMGINLFRVLMTYLKPVLPTLSERVEAFLNTELSWDAIAQPLLGHKVNAFKALYNRIDMKQVDALVEASKEEVKAAAAPVTGPLADDPIQETITFDDFAKVDLRVALIENAEFVEGSDKLLRLTLDLGGEKRNVFSGIRSAYPDPQALIGRHTVMVANLAPRKMRFGISEGMVMAAGPGGKDIFLLSPDDGAKPGQQVK.

The short motif at 15–25 (PYANGSIHLGH) is the 'HIGH' region element. The Zn(2+) site is built by C146, C149, C159, and C162. Residues 333-337 (KMSKS) carry the 'KMSKS' region motif. K336 is a binding site for ATP. One can recognise a tRNA-binding domain in the interval 575-677 (DFAKVDLRVA…DGAKPGQQVK (103 aa)).

This sequence belongs to the class-I aminoacyl-tRNA synthetase family. MetG type 1 subfamily. As to quaternary structure, homodimer. Requires Zn(2+) as cofactor.

It localises to the cytoplasm. The catalysed reaction is tRNA(Met) + L-methionine + ATP = L-methionyl-tRNA(Met) + AMP + diphosphate. Functionally, is required not only for elongation of protein synthesis but also for the initiation of all mRNA translation through initiator tRNA(fMet) aminoacylation. In Citrobacter koseri (strain ATCC BAA-895 / CDC 4225-83 / SGSC4696), this protein is Methionine--tRNA ligase.